The primary structure comprises 449 residues: Asparagine--tRNA ligase (449 aa).

The protein belongs to the class-II aminoacyl-tRNA synthetase family. As to quaternary structure, homodimer.

The protein resides in the cytoplasm. The enzyme catalyses tRNA(Asn) + L-asparagine + ATP = L-asparaginyl-tRNA(Asn) + AMP + diphosphate + H(+). The protein is Asparagine--tRNA ligase of Deinococcus geothermalis (strain DSM 11300 / CIP 105573 / AG-3a).